Consider the following 418-residue polypeptide: uncharacterized protein (418 aa).

Positions 1 to 24 are disordered; it reads MSGTAGFITVSPGPPTEAPGGFPR.

The protein to A.pernix APE_1276 and S.solfataricus SSO2105.

This is an uncharacterized protein from Aeropyrum pernix (strain ATCC 700893 / DSM 11879 / JCM 9820 / NBRC 100138 / K1).